A 458-amino-acid polypeptide reads, in one-letter code: Retinoic acid receptor alpha-B (458 aa).

Residues 1-79 (MYESVDVVGL…PPSPPPPPRV (79 aa)) form a modulating region. Residues 48–75 (HWSGSNHSVETQSTSSEEIVPSPPSPPP) are disordered. The span at 49–64 (WSGSNHSVETQSTSSE) shows a compositional bias: polar residues. Positions 80-155 (YKPCFVCQDK…VGMSKESVRN (76 aa)) form a DNA-binding region, nuclear receptor. 2 NR C4-type zinc fingers span residues 83-103 (CFVC…CEGC) and 119-138 (CHRE…CQYC). A hinge region spans residues 156 to 177 (DRNKRKKDDKKQECLENYVLSP). In terms of domain architecture, NR LBD spans 178–412 (DTEKMIEQVR…PLIQEMLENS (235 aa)). Positions 403–411 (PLIQEMLEN) match the 9aaTAD motif. A disordered region spans residues 411–458 (NSEGLEGGGSKGAGGGGGGGGGKGAPPGSCSPSLSPSSAHSSPSAHSP). Residues 415–435 (LEGGGSKGAGGGGGGGGGKGA) show a composition bias toward gly residues. A compositionally biased stretch (low complexity) spans 436–458 (PPGSCSPSLSPSSAHSSPSAHSP).

This sequence belongs to the nuclear hormone receptor family. NR1 subfamily. Heterodimer; with an rxr molecule. Binds DNA preferentially as a rar/rxr heterodimer. As to expression, in the embryo, zygotic expression largely overlaps that of raraa, with high levels in hindbrain, lateral plate mesoderm (LPM) and tail bud, but in later stages rarab is expressed more broadly in the brain, pectoral fin bud and pharyngeal arches.

It localises to the nucleus. Its function is as follows. Receptor for retinoic acid. Retinoic acid receptors bind as heterodimers to their target response elements in response to their ligands, all-trans or 9-cis retinoic acid, and regulate gene expression in various biological processes. The rar/rxr heterodimers bind to the retinoic acid response elements (RARE) composed of tandem 5'-AGGTCA-3' sites known as DR1-DR5. Required for hindbrain development and, in lateral plate mesoderm, for specification of the pectoral fins. The sequence is that of Retinoic acid receptor alpha-B from Danio rerio (Zebrafish).